A 229-amino-acid chain; its full sequence is MKIGIVGAMAQEVQMLADLMQDKRVTQVASCTIYEGMIHGKAVALLQSGIGKVAAAIGATLLLEMCKPDLVINTGSAGGVATGLNVGDIVISDETVYHDADVTAFGYAKGQLPACPARFQSDEKLVQLAEKIAVQQQQQVKRGLICSGDSFIQGGTPLAQIKADFPTVMAVEMEATAIAQVCHAFNVPFVVVRAISDSGDGEASMSFEEFLPLAAKQSSAMVLEMIDNL.

Glutamate 12 acts as the Proton acceptor in catalysis. Substrate-binding positions include glycine 78, isoleucine 152, and 173-174; that span reads ME. Aspartate 197 acts as the Proton donor in catalysis.

The protein belongs to the PNP/UDP phosphorylase family. MtnN subfamily.

It catalyses the reaction S-adenosyl-L-homocysteine + H2O = S-(5-deoxy-D-ribos-5-yl)-L-homocysteine + adenine. It carries out the reaction S-methyl-5'-thioadenosine + H2O = 5-(methylsulfanyl)-D-ribose + adenine. The enzyme catalyses 5'-deoxyadenosine + H2O = 5-deoxy-D-ribose + adenine. Its pathway is amino-acid biosynthesis; L-methionine biosynthesis via salvage pathway; S-methyl-5-thio-alpha-D-ribose 1-phosphate from S-methyl-5'-thioadenosine (hydrolase route): step 1/2. Catalyzes the irreversible cleavage of the glycosidic bond in both 5'-methylthioadenosine (MTA) and S-adenosylhomocysteine (SAH/AdoHcy) to adenine and the corresponding thioribose, 5'-methylthioribose and S-ribosylhomocysteine, respectively. Also cleaves 5'-deoxyadenosine, a toxic by-product of radical S-adenosylmethionine (SAM) enzymes, into 5-deoxyribose and adenine. The chain is 5'-methylthioadenosine/S-adenosylhomocysteine nucleosidase from Pasteurella multocida (strain Pm70).